The sequence spans 115 residues: Class I hydrophobin 21 (115 aa).

A signal peptide spans 1-20; the sequence is MFAAPATMLVLAALAALSSA. Cystine bridges form between cysteine 30/cysteine 93, cysteine 37/cysteine 87, cysteine 38/cysteine 77, and cysteine 94/cysteine 107.

This sequence belongs to the fungal hydrophobin family. Self-assembles to form functional amyloid fibrils called rodlets. Self-assembly into fibrillar rodlets occurs spontaneously at hydrophobic:hydrophilic interfaces and the rodlets further associate laterally to form amphipathic monolayers.

The protein localises to the secreted. It localises to the cell wall. In terms of biological role, aerial growth, conidiation, and dispersal of filamentous fungi in the environment rely upon a capability of their secreting small amphipathic proteins called hydrophobins (HPBs) with low sequence identity. Class I can self-assemble into an outermost layer of rodlet bundles on aerial cell surfaces, conferring cellular hydrophobicity that supports fungal growth, development and dispersal; whereas Class II form highly ordered films at water-air interfaces through intermolecular interactions but contribute nothing to the rodlet structure. This Pleurotus ostreatus (strain PC15) (Oyster mushroom) protein is Class I hydrophobin 21.